A 59-amino-acid chain; its full sequence is UPF0434 protein VV1_2087 (59 aa).

This sequence belongs to the UPF0434 family.

This chain is UPF0434 protein VV1_2087, found in Vibrio vulnificus (strain CMCP6).